The chain runs to 571 residues: Phosphoenolpyruvate-protein phosphotransferase (571 aa).

H189 functions as the Tele-phosphohistidine intermediate in the catalytic mechanism. Positions 296 and 332 each coordinate phosphoenolpyruvate. Mg(2+)-binding residues include E431 and D455. Phosphoenolpyruvate-binding positions include 454-455 (ND) and R465. C502 acts as the Proton donor in catalysis.

This sequence belongs to the PEP-utilizing enzyme family. As to quaternary structure, homodimer. It depends on Mg(2+) as a cofactor.

Its subcellular location is the cytoplasm. It catalyses the reaction L-histidyl-[protein] + phosphoenolpyruvate = N(pros)-phospho-L-histidyl-[protein] + pyruvate. In terms of biological role, general (non sugar-specific) component of the phosphoenolpyruvate-dependent sugar phosphotransferase system (sugar PTS). This major carbohydrate active-transport system catalyzes the phosphorylation of incoming sugar substrates concomitantly with their translocation across the cell membrane. Enzyme I transfers the phosphoryl group from phosphoenolpyruvate (PEP) to the phosphoryl carrier protein (HPr). The protein is Phosphoenolpyruvate-protein phosphotransferase (ptsI) of Buchnera aphidicola subsp. Acyrthosiphon pisum (strain APS) (Acyrthosiphon pisum symbiotic bacterium).